The following is a 612-amino-acid chain: MLHVLSVGPSHAAFTVEAAMATMKKFHSIVGEKPAQDAEAPSVDDPNVGQIRADDKEAAHAPANAETNNEEANPSDGAQAGVKKIEAVTLSWTRGTAIWFLTLVNDFRLSMYTSLNAYATSSFLGHSLLTVINIVSYVMGGSVYIPMAKALDLWGRAEGFLLMTFFCILGLILLASSQNLPTYCAGQVFYKVGFGGLSYTWNVLAADVTNLRNRGLAFAFTSSPALISAFAGSKAASDLLAHSTWRWGFGMWAIILPVVALPIYGLLAYHLRQAEKKGVLVKETRDWSITPKTVWWAIMEFDLPGVLLFAGGFVIFLLPFTLAATAPHGYQTDYIIAMITLGLALIIAFGFYEMLVAPVPFLNYKFLIDRTVLGACLLDMTYQVSYYCYASYLPSFLQVVYELDVATAGYVTNTFSVVSFVFLFFAGWLIRWTGRFKWILWVCVPLYIFGLGLMIHFRQPGGYIGYIVMCEIFFSVAGSVFILCVQLAVLASVDHQHVAAVLALLFVMGSIGGSIGSAICGAIWTSTFLSRLERNLPASAMPDLSLIYSSLPTQLSYPVGSATRTAIVEAYGYAQARMLIAGTAFMVLGFIWVGMMRNLNVKNMTQTKGNVV.

Topologically, residues 1 to 86 (MLHVLSVGPS…GAQAGVKKIE (86 aa)) are cytoplasmic. The tract at residues 55–78 (DKEAAHAPANAETNNEEANPSDGA) is disordered. A compositionally biased stretch (low complexity) spans 60–72 (HAPANAETNNEEA). A helical membrane pass occupies residues 87 to 104 (AVTLSWTRGTAIWFLTLV). Topologically, residues 105 to 127 (NDFRLSMYTSLNAYATSSFLGHS) are extracellular. A helical membrane pass occupies residues 128–148 (LLTVINIVSYVMGGSVYIPMA). Topologically, residues 149-156 (KALDLWGR) are cytoplasmic. The chain crosses the membrane as a helical span at residues 157–177 (AEGFLLMTFFCILGLILLASS). Residues 178–187 (QNLPTYCAGQ) are Extracellular-facing. The chain crosses the membrane as a helical span at residues 188 to 208 (VFYKVGFGGLSYTWNVLAADV). The Cytoplasmic portion of the chain corresponds to 209-215 (TNLRNRG). Residues 216–236 (LAFAFTSSPALISAFAGSKAA) traverse the membrane as a helical segment. At 237–246 (SDLLAHSTWR) the chain is on the extracellular side. A helical membrane pass occupies residues 247-267 (WGFGMWAIILPVVALPIYGLL). Over 268-302 (AYHLRQAEKKGVLVKETRDWSITPKTVWWAIMEFD) the chain is Cytoplasmic. The chain crosses the membrane as a helical span at residues 303-323 (LPGVLLFAGGFVIFLLPFTLA). Residues 324–334 (ATAPHGYQTDY) are Extracellular-facing. Residues 335–355 (IIAMITLGLALIIAFGFYEML) traverse the membrane as a helical segment. Over 356–370 (VAPVPFLNYKFLIDR) the chain is Cytoplasmic. Residues 371-393 (TVLGACLLDMTYQVSYYCYASYL) form a helical membrane-spanning segment. Residues 394 to 409 (PSFLQVVYELDVATAG) are Extracellular-facing. Residues 410-430 (YVTNTFSVVSFVFLFFAGWLI) form a helical membrane-spanning segment. At 431–435 (RWTGR) the chain is on the cytoplasmic side. Residues 436-456 (FKWILWVCVPLYIFGLGLMIH) traverse the membrane as a helical segment. Topologically, residues 457-463 (FRQPGGY) are extracellular. A helical transmembrane segment spans residues 464–484 (IGYIVMCEIFFSVAGSVFILC). The Cytoplasmic segment spans residues 485–498 (VQLAVLASVDHQHV). Residues 499 to 519 (AAVLALLFVMGSIGGSIGSAI) form a helical membrane-spanning segment. The Extracellular portion of the chain corresponds to 520 to 575 (CGAIWTSTFLSRLERNLPASAMPDLSLIYSSLPTQLSYPVGSATRTAIVEAYGYAQ). The helical transmembrane segment at 576-596 (ARMLIAGTAFMVLGFIWVGMM) threads the bilayer. Residues 597–612 (RNLNVKNMTQTKGNVV) lie on the Cytoplasmic side of the membrane.

This sequence belongs to the major facilitator superfamily.

The protein resides in the cell tip. Its subcellular location is the cytoplasmic vesicle membrane. The protein localises to the cell membrane. Its function is as follows. Major facilitator transporter involved in triacetylfusarinine C (TAFC) uptake. Can also transport ferricrocin and coprogen, but not ferrichrysin. MirB plays a crucial role for virulence in a murine model of pulmonary aspergillosis, indicating that TAFC-mediated iron uptake plays a dominant role during infection. The chain is MFS siderochrome iron transporter B from Aspergillus fumigatus (strain ATCC MYA-4609 / CBS 101355 / FGSC A1100 / Af293) (Neosartorya fumigata).